We begin with the raw amino-acid sequence, 218 residues long: Pyridoxine/pyridoxamine 5'-phosphate oxidase (218 aa).

Residues 14–17 and Lys-72 each bind substrate; that span reads RREY. Residues 67–72, 82–83, Arg-88, Lys-89, and Gln-111 each bind FMN; these read RIVLLK and YT. 3 residues coordinate substrate: Tyr-129, Arg-133, and Ser-137. FMN-binding positions include 146–147 and Trp-191; that span reads QS. Residue 197-199 coordinates substrate; that stretch reads RLH. Arg-201 is a binding site for FMN.

Belongs to the pyridoxamine 5'-phosphate oxidase family. As to quaternary structure, homodimer. Requires FMN as cofactor.

The enzyme catalyses pyridoxamine 5'-phosphate + O2 + H2O = pyridoxal 5'-phosphate + H2O2 + NH4(+). It catalyses the reaction pyridoxine 5'-phosphate + O2 = pyridoxal 5'-phosphate + H2O2. It participates in cofactor metabolism; pyridoxal 5'-phosphate salvage; pyridoxal 5'-phosphate from pyridoxamine 5'-phosphate: step 1/1. It functions in the pathway cofactor metabolism; pyridoxal 5'-phosphate salvage; pyridoxal 5'-phosphate from pyridoxine 5'-phosphate: step 1/1. Functionally, catalyzes the oxidation of either pyridoxine 5'-phosphate (PNP) or pyridoxamine 5'-phosphate (PMP) into pyridoxal 5'-phosphate (PLP). In Escherichia coli O7:K1 (strain IAI39 / ExPEC), this protein is Pyridoxine/pyridoxamine 5'-phosphate oxidase.